We begin with the raw amino-acid sequence, 290 residues long: ATP synthase gamma chain (290 aa).

This sequence belongs to the ATPase gamma chain family. In terms of assembly, F-type ATPases have 2 components, CF(1) - the catalytic core - and CF(0) - the membrane proton channel. CF(1) has five subunits: alpha(3), beta(3), gamma(1), delta(1), epsilon(1). CF(0) has three main subunits: a, b and c.

It is found in the cell inner membrane. Functionally, produces ATP from ADP in the presence of a proton gradient across the membrane. The gamma chain is believed to be important in regulating ATPase activity and the flow of protons through the CF(0) complex. The protein is ATP synthase gamma chain of Desulfotalea psychrophila (strain LSv54 / DSM 12343).